The sequence spans 1841 residues: Sodium channel protein type 4 subunit alpha (1841 aa).

The Cytoplasmic portion of the chain corresponds to M1–A131. The segment covering A32–A60 has biased composition (basic and acidic residues). Positions A32–N63 are disordered. The I repeat unit spans residues M113 to N448. Residues L132–M150 form a helical membrane-spanning segment. The Extracellular segment spans residues S151–S157. The chain crosses the membrane as a helical span at residues K158–A178. Residues R179–P192 lie on the Cytoplasmic side of the membrane. A helical membrane pass occupies residues W193–V210. At D211 to S216 the chain is on the extracellular side. The N-linked (GlcNAc...) asparagine glycan is linked to N214. Residues A217–I233 traverse the membrane as a helical segment. Over P234–D252 the chain is Cytoplasmic. Residues V253–F272 traverse the membrane as a helical segment. The Extracellular portion of the chain corresponds to M273–T385. Cysteines 280 and 354 form a disulfide. N-linked (GlcNAc...) asparagine glycosylation is found at N288, N291, N297, N303, N315, N327, and N356. C363 and C369 are joined by a disulfide. Residues F386–L410 constitute an intramembrane region (pore-forming). The Extracellular segment spans residues R411–Y417. Residues M418–A438 traverse the membrane as a helical segment. Over V439–P572 the chain is Cytoplasmic. The segment at A484 to S522 is disordered. The II repeat unit spans residues C554 to G826. Residues F573 to M591 traverse the membrane as a helical segment. Topologically, residues E592–N602 are extracellular. Residues V603–K622 traverse the membrane as a helical segment. At L623–W636 the chain is on the cytoplasmic side. Residues N637 to V656 form a helical membrane-spanning segment. Residues Q657–G658 lie on the Extracellular side of the membrane. Residues L659–S676 traverse the membrane as a helical segment. Residues W677–G692 lie on the Cytoplasmic side of the membrane. A helical membrane pass occupies residues A693 to V711. Residues G712–D740 lie on the Extracellular side of the membrane. A disulfide bridge connects residues C725 and C731. Positions F741–W761 form an intramembrane region, pore-forming. Residues D762–C772 are Extracellular-facing. Cysteines 763 and 772 form a disulfide. The helical transmembrane segment at L773–F791 threads the bilayer. The Cytoplasmic segment spans residues L792–W1026. Disordered regions lie at residues E854–G896 and S925–L983. The span at E867–I887 shows a compositional bias: basic and acidic residues. Composition is skewed to acidic residues over residues S925–P941 and E969–L983. The stretch at R1007–L1320 is one III repeat. A helical transmembrane segment spans residues F1027–F1044. The Extracellular portion of the chain corresponds to E1045 to T1057. A helical membrane pass occupies residues I1058 to L1076. The Cytoplasmic segment spans residues K1077 to A1090. The helical transmembrane segment at W1091 to N1109 threads the bilayer. Residues W1110–G1117 lie on the Extracellular side of the membrane. A helical membrane pass occupies residues P1118–R1136. Residues F1137–S1153 lie on the Cytoplasmic side of the membrane. A helical membrane pass occupies residues I1154–V1173. Residues N1174–V1224 lie on the Extracellular side of the membrane. C1183 and C1203 are joined by a disulfide. 2 N-linked (GlcNAc...) asparagine glycosylation sites follow: N1185 and N1199. Residues G1225 to A1246 constitute an intramembrane region (pore-forming). The Extracellular segment spans residues A1247–L1263. Residues Y1264–I1285 traverse the membrane as a helical segment. At G1286–V1348 the chain is on the cytoplasmic side. The tract at residues I1304–M1306 is important for rapid channel inactivation. The stretch at I1329–Q1627 is one IV repeat. The chain crosses the membrane as a helical span at residues F1349–V1366. The Extracellular portion of the chain corresponds to E1367–D1377. A helical membrane pass occupies residues I1378–L1396. Topologically, residues K1397–I1408 are cytoplasmic. The helical transmembrane segment at G1409 to A1426 threads the bilayer. Topologically, residues L1427–T1439 are extracellular. Residues L1440–I1456 form a helical membrane-spanning segment. The Cytoplasmic segment spans residues R1457–A1475. A helical transmembrane segment spans residues L1476–F1493. The Extracellular portion of the chain corresponds to G1494 to T1515. Positions F1516–P1538 form an intramembrane region, pore-forming. Residues I1539–G1568 are Extracellular-facing. C1547 and C1562 are disulfide-bonded. Residues I1569–I1591 form a helical membrane-spanning segment. Topologically, residues L1592–V1841 are cytoplasmic. Residues E1721–H1750 enclose the IQ domain. Residues S1776–T1794 are compositionally biased toward basic and acidic residues. Positions S1776 to V1841 are disordered. The span at T1801–A1812 shows a compositional bias: polar residues. Pro residues predominate over residues T1814–P1826.

It belongs to the sodium channel (TC 1.A.1.10) family. Nav1.4/SCN4A subfamily. As to quaternary structure, the Nav1.4 voltage-gated sodium channel consists of an ion-conducting alpha subunit SCN4A which is functional on its own and a regulatory beta subunit SCN1B. SCN1B strongly enhances the presence of SCN4A at the cell surface. SCN1B is also required for rapid channel inactivation and recovery after inactivation. It prevents the decrease of channel activity in response to repetitive, high-frequency depolarizations. Interacts with the syntrophins SNTA1, SNTB1 and SNTB2 (via PDZ domain); probably links SCN4A to the actin cytoskeleton and the extracellular matrix via the dystrophin-associated protein complex and regulates its localization in muscle cells. Interacts with TMEM233; probable regulator of the channel. Detected in quadriceps muscle (at protein level). Detected in hind-limb skeletal muscles, but not in heart or brain. Detected at low levels in the myocardium. According to Pubme=26427606 detected also in brain.

The protein resides in the cell membrane. It carries out the reaction Na(+)(in) = Na(+)(out). Its activity is regulated as follows. The channel is inhibited by tetrodotoxin. Functionally, pore-forming subunit of Nav1.4, a voltage-gated sodium (Nav) channel that directly mediates the depolarizing phase of action potentials in excitable membranes. Navs, also called VGSCs (voltage-gated sodium channels) or VDSCs (voltage-dependent sodium channels), operate by switching between closed and open conformations depending on the voltage difference across the membrane. In the open conformation they allow Na(+) ions to selectively pass through the pore, along their electrochemical gradient. The influx of Na+ ions provokes membrane depolarization, initiating the propagation of electrical signals throughout cells and tissues. Highly expressed in skeletal muscles, Nav1.4 generates the action potential crucial for muscle contraction. The chain is Sodium channel protein type 4 subunit alpha from Mus musculus (Mouse).